Consider the following 420-residue polypeptide: Glutamyl-tRNA reductase (420 aa).

Substrate is bound by residues 49–52 (TCNR), serine 109, 114–116 (EPQ), and glutamine 120. Residue cysteine 50 is the Nucleophile of the active site. 189 to 194 (GAGETI) provides a ligand contact to NADP(+).

It belongs to the glutamyl-tRNA reductase family. As to quaternary structure, homodimer.

The enzyme catalyses (S)-4-amino-5-oxopentanoate + tRNA(Glu) + NADP(+) = L-glutamyl-tRNA(Glu) + NADPH + H(+). It participates in porphyrin-containing compound metabolism; protoporphyrin-IX biosynthesis; 5-aminolevulinate from L-glutamyl-tRNA(Glu): step 1/2. Functionally, catalyzes the NADPH-dependent reduction of glutamyl-tRNA(Glu) to glutamate 1-semialdehyde (GSA). The chain is Glutamyl-tRNA reductase from Yersinia pseudotuberculosis serotype O:1b (strain IP 31758).